We begin with the raw amino-acid sequence, 449 residues long: UDP-N-acetylmuramoylalanine--D-glutamate ligase (449 aa).

118–124 (GTNGKTT) contacts ATP.

Belongs to the MurCDEF family.

Its subcellular location is the cytoplasm. The enzyme catalyses UDP-N-acetyl-alpha-D-muramoyl-L-alanine + D-glutamate + ATP = UDP-N-acetyl-alpha-D-muramoyl-L-alanyl-D-glutamate + ADP + phosphate + H(+). The protein operates within cell wall biogenesis; peptidoglycan biosynthesis. Its function is as follows. Cell wall formation. Catalyzes the addition of glutamate to the nucleotide precursor UDP-N-acetylmuramoyl-L-alanine (UMA). The protein is UDP-N-acetylmuramoylalanine--D-glutamate ligase of Staphylococcus epidermidis (strain ATCC 12228 / FDA PCI 1200).